We begin with the raw amino-acid sequence, 146 residues long: Universal stress protein A homolog 2 (146 aa).

This sequence belongs to the universal stress protein A family. Homodimer.

The protein resides in the cytoplasm. In terms of biological role, involved in stress response. This chain is Universal stress protein A homolog 2 (uspA2), found in Coxiella burnetii (strain RSA 493 / Nine Mile phase I).